The primary structure comprises 149 residues: Secreted RxLR effector protein 17 (149 aa).

Positions 1-24 (MRLFYFSAMSVIGLLARNNMVVVA) are cleaved as a signal peptide. Positions 52–78 (RSLRTREKDIQDSTVAKDDAIKVEEDR) match the RxLR-dEER motif.

This sequence belongs to the RxLR effector family.

It localises to the secreted. Its subcellular location is the host cytoplasm. The protein localises to the host nucleus. Its function is as follows. Effector that acts as a broad suppressor of cell death to interrupt plant immunity. Inhibits cell death induced by cell death-inducing proteins, including the PAMP elicitor INF1 from P.infestans. This is Secreted RxLR effector protein 17 from Plasmopara viticola (Downy mildew of grapevine).